Here is a 314-residue protein sequence, read N- to C-terminus: Homoserine kinase (314 aa).

95-105 (PHSRGLGSSAS) contributes to the ATP binding site.

Belongs to the GHMP kinase family. Homoserine kinase subfamily.

The protein localises to the cytoplasm. It carries out the reaction L-homoserine + ATP = O-phospho-L-homoserine + ADP + H(+). It functions in the pathway amino-acid biosynthesis; L-threonine biosynthesis; L-threonine from L-aspartate: step 4/5. Catalyzes the ATP-dependent phosphorylation of L-homoserine to L-homoserine phosphate. This chain is Homoserine kinase, found in Mycobacterium ulcerans (strain Agy99).